Consider the following 642-residue polypeptide: Pentatricopeptide repeat-containing protein At3g16010 (642 aa).

PPR repeat units follow at residues 125 to 159 (DCST…TYVS), 161 to 195 (SPAV…KCKP), 196 to 230 (TSST…GDCF), 232 to 266 (DTIT…CMQP), 267 to 301 (TEKI…GCSP), 302 to 336 (TVYT…GLTP), 337 to 371 (DVVF…RCTP), 372 to 407 (TVVS…SVSP), 408 to 442 (SEFT…GFPP), 443 to 473 (CPAA…LKEN), 478 to 512 (SSRV…GSGP), 513 to 547 (DVYA…GCRA), 548 to 582 (DINS…GIKP), and 583 to 617 (DGVT…GFEY).

It belongs to the PPR family. P subfamily.

The polypeptide is Pentatricopeptide repeat-containing protein At3g16010 (Arabidopsis thaliana (Mouse-ear cress)).